Here is a 172-residue protein sequence, read N- to C-terminus: Glutamyl-tRNA(Gln) amidotransferase subunit C-4, mitochondrial (172 aa).

A mitochondrion-targeting transit peptide spans 1–23 (MIRIPFHLRQTPGRTLHSLVRSF). Residues 51-73 (PSKVPQRPHKSTIDGQSTPTRIP) form a disordered region.

The protein belongs to the GatC family. As to quaternary structure, subunit of the heterotrimeric GatCAB amidotransferase (AdT) complex, composed of A, B and C subunits.

Its subcellular location is the mitochondrion. The enzyme catalyses L-glutamyl-tRNA(Gln) + L-glutamine + ATP + H2O = L-glutaminyl-tRNA(Gln) + L-glutamate + ADP + phosphate + H(+). Its function is as follows. Allows the formation of correctly charged Gln-tRNA(Gln) through the transamidation of misacylated Glu-tRNA(Gln) in the mitochondria. The reaction takes place in the presence of glutamine and ATP through an activated gamma-phospho-Glu-tRNA(Gln). The polypeptide is Glutamyl-tRNA(Gln) amidotransferase subunit C-4, mitochondrial (Culex quinquefasciatus (Southern house mosquito)).